Reading from the N-terminus, the 103-residue chain is Co-chaperonin GroES (103 aa).

It belongs to the GroES chaperonin family. In terms of assembly, heptamer of 7 subunits arranged in a ring. Interacts with the chaperonin GroEL.

The protein localises to the cytoplasm. In terms of biological role, together with the chaperonin GroEL, plays an essential role in assisting protein folding. The GroEL-GroES system forms a nano-cage that allows encapsulation of the non-native substrate proteins and provides a physical environment optimized to promote and accelerate protein folding. GroES binds to the apical surface of the GroEL ring, thereby capping the opening of the GroEL channel. This Synechococcus sp. (strain JA-3-3Ab) (Cyanobacteria bacterium Yellowstone A-Prime) protein is Co-chaperonin GroES.